Here is a 204-residue protein sequence, read N- to C-terminus: Neurensin-2 (204 aa).

2 consecutive transmembrane segments (helical) span residues 66-86 and 122-142; these read LSSG…GYAV and LCVA…IGWL. Residues 178–204 form a disordered region; it reads SGQSWFSPPASPFGQSSVQTIQPKRDS. Positions 190-204 are enriched in polar residues; sequence FGQSSVQTIQPKRDS.

The protein belongs to the VMP family.

The protein localises to the membrane. Functionally, may play a role in maintenance and/or transport of vesicles. The polypeptide is Neurensin-2 (NRSN2) (Homo sapiens (Human)).